We begin with the raw amino-acid sequence, 883 residues long: Phosphoenolpyruvate carboxylase (883 aa).

Residues histidine 138 and lysine 546 contribute to the active site.

It belongs to the PEPCase type 1 family. Requires Mg(2+) as cofactor.

It carries out the reaction oxaloacetate + phosphate = phosphoenolpyruvate + hydrogencarbonate. Functionally, forms oxaloacetate, a four-carbon dicarboxylic acid source for the tricarboxylic acid cycle. This is Phosphoenolpyruvate carboxylase from Salmonella arizonae (strain ATCC BAA-731 / CDC346-86 / RSK2980).